Reading from the N-terminus, the 639-residue chain is Zinc finger protein ZIC 5 (639 aa).

Disordered stretches follow at residues 113 to 171, 189 to 251, 323 to 355, and 379 to 409; these read PCGG…GHSR, HGAP…GHPH, PGPHLQHHAPPPAPPPPPAPAQHPHQHHPHLPG, and PDELAGLPPPPPPPPPPPPPPPAGGAKPCSK. The segment covering 124–150 has biased composition (pro residues); sequence SAPPPPAPPLPPTPSPPPPPPPPPPPA. 2 stretches are compositionally biased toward pro residues: residues 331 to 343 and 385 to 401; these read APPPAPPPPPAPA and LPPPPPPPPPPPPPPPA. A C2H2-type 1; atypical zinc finger spans residues 434–461; sequence HVCFWEDCPREGKPFKAKYKLINHIRVH. 3 consecutive C2H2-type zinc fingers follow at residues 467–491, 497–521, and 527–551; these read FPCPFPGCGKVFARSENLKIHKRTH, FKCEFDGCDRKFANSSDRKKHSHVH, and YYCKIRGCDKSYTHPSSLRKHMKIH. Residues 548-568 form a disordered region; it reads MKIHCKSPPPSPGPLGYSSVG. Residues serine 554, serine 558, and serine 576 each carry the phosphoserine modification. The interval 607 to 639 is disordered; the sequence is APSHLHTPSSNGTTSETEDEEIYGNPEVVRTIH. A compositionally biased stretch (polar residues) spans 612–621; it reads HTPSSNGTTS.

This sequence belongs to the GLI C2H2-type zinc-finger protein family.

It is found in the nucleus. Functionally, essential for neural crest development, converting cells from an epidermal fate to a neural crest cell fate. Binds to DNA. This chain is Zinc finger protein ZIC 5 (ZIC5), found in Homo sapiens (Human).